Here is a 242-residue protein sequence, read N- to C-terminus: MQKHNIKLNQNQDISQLFHDEVPLFDNSITSKDKEVIETLSEIYSIVITLDHVEKAYLKDSIDDTQYTNTVDKLLKQFKVYLNSQNKEEINKHFQSIEAFCDTYNITASNAITRLERGIPITAEHAISTTTSAPSGDNKQSSSSDKKFNAKYVAEATGNFITVMDALKLNYNAKDQLHPLLAELLISINRVTRDDFENRSKLIDWIVRINKLSIGDTLTETQIRELLFDLELAYKSFYALLD.

Residues 11–125 enclose the VPS28 N-terminal domain; the sequence is NQDISQLFHD…ERGIPITAEH (115 aa). One can recognise a VPS28 C-terminal domain in the interval 148–242; that stretch reads FNAKYVAEAT…AYKSFYALLD (95 aa). The interaction with VSP36 and VPS20 stretch occupies residues 148 to 242; the sequence is FNAKYVAEAT…AYKSFYALLD (95 aa).

It belongs to the VPS28 family. As to quaternary structure, component of the ESCRT-I complex (endosomal sorting complex required for transport I) which consists of STP22, VPS28, SRN2 and MVB12 in a 1:1:1:1 stoichiometry. Self-associates. Interacts with VPS27; the interaction mediates the association with the ESCRT-0 complex. Interacts with VPS20; the interaction mediates the association with the ESCRT-III complex.

The protein localises to the cytoplasm. It localises to the endosome. Its subcellular location is the late endosome membrane. Component of the ESCRT-I complex, a regulator of vesicular trafficking process. Required for normal endocytic and biosynthetic traffic to the yeast vacuole. The polypeptide is Vacuolar protein sorting-associated protein 28 (VPS28) (Saccharomyces cerevisiae (strain ATCC 204508 / S288c) (Baker's yeast)).